The sequence spans 542 residues: Thermosome subunit (542 aa).

It belongs to the TCP-1 chaperonin family. Forms an oligomeric complex of eight-membered rings.

In terms of biological role, molecular chaperone; binds unfolded polypeptides in vitro, and has a weak ATPase activity. The protein is Thermosome subunit (ths) of Methanocaldococcus jannaschii (strain ATCC 43067 / DSM 2661 / JAL-1 / JCM 10045 / NBRC 100440) (Methanococcus jannaschii).